Reading from the N-terminus, the 439-residue chain is GTPase Der (439 aa).

2 EngA-type G domains span residues 2-168 (ATVL…EEKG) and 181-357 (IKIA…SSYT). GTP-binding positions include 8–15 (GKPNVGKS), 55–59 (DTCGV), 118–121 (NKTE), 187–194 (GRPNVGKS), 234–238 (DTAGL), and 300–303 (NKWD). The KH-like domain occupies 358–439 (TKVPSSALNS…PIFLKFKKSR (82 aa)).

The protein belongs to the TRAFAC class TrmE-Era-EngA-EngB-Septin-like GTPase superfamily. EngA (Der) GTPase family. In terms of assembly, associates with the 50S ribosomal subunit.

Functionally, GTPase that plays an essential role in the late steps of ribosome biogenesis. The protein is GTPase Der of Thermotoga neapolitana (strain ATCC 49049 / DSM 4359 / NBRC 107923 / NS-E).